The following is a 932-amino-acid chain: Calpain-like protease palB/cpr-8 (932 aa).

The Calpain catalytic domain occupies 96-419 (KLHGNIFPPW…FDSLYVNWSP (324 aa)). Active-site residues include Cys-178, His-346, and Asn-366. Residues 890–932 (QGHVTEGSDDDGGGGGGGGGGVHVEISSDGVVSIGEWEVADED) are disordered. Gly residues predominate over residues 902–911 (GGGGGGGGGV).

It belongs to the peptidase C2 family. PalB/RIM13 subfamily.

Required for the proteolytic cleavage of the transcription factor pacc-1 in response to alkaline ambient pH. The polypeptide is Calpain-like protease palB/cpr-8 (cpr-8) (Neurospora crassa (strain ATCC 24698 / 74-OR23-1A / CBS 708.71 / DSM 1257 / FGSC 987)).